A 127-amino-acid chain; its full sequence is Phosphoribosyl-AMP cyclohydrolase (127 aa).

D96 lines the Mg(2+) pocket. C97 contacts Zn(2+). Mg(2+)-binding residues include D98 and D100. Residues C113 and C120 each contribute to the Zn(2+) site.

The protein belongs to the PRA-CH family. As to quaternary structure, homodimer. The cofactor is Mg(2+). Zn(2+) serves as cofactor.

The protein localises to the cytoplasm. The enzyme catalyses 1-(5-phospho-beta-D-ribosyl)-5'-AMP + H2O = 1-(5-phospho-beta-D-ribosyl)-5-[(5-phospho-beta-D-ribosylamino)methylideneamino]imidazole-4-carboxamide. It functions in the pathway amino-acid biosynthesis; L-histidine biosynthesis; L-histidine from 5-phospho-alpha-D-ribose 1-diphosphate: step 3/9. Catalyzes the hydrolysis of the adenine ring of phosphoribosyl-AMP. The protein is Phosphoribosyl-AMP cyclohydrolase of Corynebacterium jeikeium (strain K411).